Reading from the N-terminus, the 337-residue chain is Large ribosomal subunit protein uL3 (337 aa).

Residues 1 to 20 are disordered; sequence MASIHRPKRGSLAFSPRKRA.

This sequence belongs to the universal ribosomal protein uL3 family. In terms of assembly, part of the 50S ribosomal subunit. Forms a cluster with proteins L14 and L24e.

Its function is as follows. One of the primary rRNA binding proteins, it binds directly near the 3'-end of the 23S rRNA, where it nucleates assembly of the 50S subunit. The sequence is that of Large ribosomal subunit protein uL3 from Methanosarcina barkeri (strain Fusaro / DSM 804).